The sequence spans 91 residues: DNA-directed RNA polymerase subunit omega (91 aa).

The protein belongs to the RNA polymerase subunit omega family. In terms of assembly, the RNAP catalytic core consists of 2 alpha, 1 beta, 1 beta' and 1 omega subunit. When a sigma factor is associated with the core the holoenzyme is formed, which can initiate transcription.

The catalysed reaction is RNA(n) + a ribonucleoside 5'-triphosphate = RNA(n+1) + diphosphate. Promotes RNA polymerase assembly. Latches the N- and C-terminal regions of the beta' subunit thereby facilitating its interaction with the beta and alpha subunits. This chain is DNA-directed RNA polymerase subunit omega, found in Photorhabdus laumondii subsp. laumondii (strain DSM 15139 / CIP 105565 / TT01) (Photorhabdus luminescens subsp. laumondii).